We begin with the raw amino-acid sequence, 432 residues long: Trigger factor (432 aa).

One can recognise a PPIase FKBP-type domain in the interval Glu161 to Pro246.

Belongs to the FKBP-type PPIase family. Tig subfamily.

It localises to the cytoplasm. The enzyme catalyses [protein]-peptidylproline (omega=180) = [protein]-peptidylproline (omega=0). Its function is as follows. Involved in protein export. Acts as a chaperone by maintaining the newly synthesized protein in an open conformation. Functions as a peptidyl-prolyl cis-trans isomerase. The protein is Trigger factor (tig) of Pasteurella multocida (strain Pm70).